The sequence spans 264 residues: 3-methyl-2-oxobutanoate hydroxymethyltransferase (264 aa).

The Mg(2+) site is built by Asp45 and Asp84. 3-methyl-2-oxobutanoate-binding positions include 45–46 (DS), Asp84, and Lys112. Glu114 serves as a coordination point for Mg(2+). Glu181 serves as the catalytic Proton acceptor.

The protein belongs to the PanB family. In terms of assembly, homodecamer; pentamer of dimers. The cofactor is Mg(2+).

The protein resides in the cytoplasm. The catalysed reaction is 3-methyl-2-oxobutanoate + (6R)-5,10-methylene-5,6,7,8-tetrahydrofolate + H2O = 2-dehydropantoate + (6S)-5,6,7,8-tetrahydrofolate. Its pathway is cofactor biosynthesis; (R)-pantothenate biosynthesis; (R)-pantoate from 3-methyl-2-oxobutanoate: step 1/2. Its function is as follows. Catalyzes the reversible reaction in which hydroxymethyl group from 5,10-methylenetetrahydrofolate is transferred onto alpha-ketoisovalerate to form ketopantoate. This chain is 3-methyl-2-oxobutanoate hydroxymethyltransferase, found in Shigella sonnei (strain Ss046).